The following is a 150-amino-acid chain: 3-dehydroquinate dehydratase (150 aa).

Y26 (proton acceptor) is an active-site residue. Residues N77, H83, and D90 each contribute to the substrate site. H103 (proton donor) is an active-site residue. Residues 104-105 (LS) and R114 contribute to the substrate site.

Belongs to the type-II 3-dehydroquinase family. Homododecamer.

It carries out the reaction 3-dehydroquinate = 3-dehydroshikimate + H2O. It participates in metabolic intermediate biosynthesis; chorismate biosynthesis; chorismate from D-erythrose 4-phosphate and phosphoenolpyruvate: step 3/7. Functionally, catalyzes a trans-dehydration via an enolate intermediate. The protein is 3-dehydroquinate dehydratase of Klebsiella pneumoniae (strain 342).